The following is a 369-amino-acid chain: Peptide chain release factor subunit 1 (369 aa).

The protein belongs to the eukaryotic release factor 1 family. In terms of assembly, heterodimer of two subunits, one of which binds GTP.

The protein resides in the cytoplasm. In terms of biological role, directs the termination of nascent peptide synthesis (translation) in response to the termination codons UAA, UAG and UGA. This is Peptide chain release factor subunit 1 (prf1) from Saccharolobus solfataricus (strain ATCC 35092 / DSM 1617 / JCM 11322 / P2) (Sulfolobus solfataricus).